Reading from the N-terminus, the 903-residue chain is Dual serine/threonine and tyrosine protein kinase (903 aa).

Positions 382-414 (ANRKQEEMKEMIVETLESMKEQLLEDAANLEFT) form a coiled coil. Residues 627-881 (PKLGRELGRG…PLLGIVQPSL (255 aa)) enclose the Protein kinase domain. Residues 633–641 (LGRGQYGVV) and Lys-656 contribute to the ATP site. Catalysis depends on Asp-752, which acts as the Proton acceptor.

Belongs to the protein kinase superfamily. Ser/Thr protein kinase family.

It is found in the cytoplasm. Its subcellular location is the cell membrane. The protein localises to the apical cell membrane. The protein resides in the basolateral cell membrane. It localises to the cell junction. It carries out the reaction L-seryl-[protein] + ATP = O-phospho-L-seryl-[protein] + ADP + H(+). The catalysed reaction is L-threonyl-[protein] + ATP = O-phospho-L-threonyl-[protein] + ADP + H(+). It catalyses the reaction L-tyrosyl-[protein] + ATP = O-phospho-L-tyrosyl-[protein] + ADP + H(+). Functionally, may act as a positive regulator of ERK phosphorylation downstream of fibroblast growth factor-receptor activation. May induce both caspase-dependent apoptosis and caspase-independent cell death. May play a role in the embryonic development. This is Dual serine/threonine and tyrosine protein kinase from Pimephales promelas (Fathead minnow).